The chain runs to 388 residues: 5-hydroxytryptamine receptor 4 (388 aa).

Topologically, residues 1–19 (MDKLDANVSSKEGFGSVEK) are extracellular. Asparagine 7 carries N-linked (GlcNAc...) asparagine glycosylation. The helical transmembrane segment at 20-44 (VVLLTFLSAVILMAILGNLLVMVAV) threads the bilayer. Residues 45 to 54 (CRDRQLRKIK) are Cytoplasmic-facing. A helical membrane pass occupies residues 55-78 (TNYFIVSLAFADLLVSVLVMPFGA). At 79-92 (IELVQDIWVYGEMF) the chain is on the extracellular side. A helical transmembrane segment spans residues 93–117 (CLVRTSLDVLLTTASIFHLCCISLD). The cysteines at positions 93 and 184 are disulfide-linked. Serotonin is bound at residue aspartate 100. Residues 118-133 (RYYAICCQPLVYRNKM) are Cytoplasmic-facing. Residues 134-157 (TPLRIALMLGGCWVIPMFISFLPI) traverse the membrane as a helical segment. Over 158-188 (MQGWNNIGIVDLIEKRKFNQNSNSTYCVFMV) the chain is Extracellular. A helical membrane pass occupies residues 189-212 (NKPYAITCSVVAFYIPFLLMVLAY). Residues 213-257 (YRIYVTAKEHARQIQVLQRAGAPAEGRPQPADQHSTHRMRTETKA) lie on the Cytoplasmic side of the membrane. The chain crosses the membrane as a helical span at residues 258–283 (AKTLCIIMGCFCLCWAPFFVTNIVDP). Position 279 (asparagine 279) interacts with serotonin. The Extracellular portion of the chain corresponds to 284 to 290 (FIDYTVP). Residues 291-314 (GQLWTAFLWLGYINSGLNPFLYAF) form a helical membrane-spanning segment. The Cytoplasmic portion of the chain corresponds to 315–388 (LNKSFRRAFL…PLVAAQPIDT (74 aa)).

It belongs to the G-protein coupled receptor 1 family. As to quaternary structure, interacts (via C-terminus 330-346 AA) with GRK5; this interaction is promoted by 5-HT (serotonin).

It localises to the cell membrane. The protein localises to the endosome membrane. Functionally, G-protein coupled receptor for 5-hydroxytryptamine (serotonin), a biogenic hormone that functions as a neurotransmitter, a hormone and a mitogen. Ligand binding causes a conformation change that triggers signaling via guanine nucleotide-binding proteins (G proteins) and modulates the activity of downstream effectors. HTR4 is coupled to G(s) G alpha proteins and mediates activation of adenylate cyclase activity. The chain is 5-hydroxytryptamine receptor 4 (HTR4) from Cavia porcellus (Guinea pig).